The following is a 487-amino-acid chain: Sodium-coupled neutral amino acid symporter 1 (487 aa).

The Cytoplasmic segment spans residues 1–74 (MMHFKSGLEL…EYIPGTTSLG (74 aa)). At S6 the chain carries Phosphoserine. T11 carries the phosphothreonine modification. A phosphoserine mark is found at S25, S28, S49, and S52. The residue at position 54 (T54) is a Phosphothreonine. The residue at position 56 (S56) is a Phosphoserine. The helical transmembrane segment at 75-97 (MSVFNLSNAIMGSGILGLAFALA) threads the bilayer. Over 98 to 112 (NTGILLFLVLLTSVT) the chain is Extracellular. A helical transmembrane segment spans residues 113–133 (LLSIYSINLLLICSKETGCMV). Residues 134 to 147 (YEKLGEQVFGTTGK) lie on the Cytoplasmic side of the membrane. The chain crosses the membrane as a helical span at residues 148 to 168 (FVIFGATSLQNTGAMLSYLFI). Topologically, residues 169–188 (VKNELPSAIKFLMGKEETFS) are extracellular. The chain crosses the membrane as a helical span at residues 189 to 211 (AWYVDGRVLVVIVTFGIILPLCL). At 212-216 (LKNLG) the chain is on the cytoplasmic side. Residues 217–237 (YLGYTSGFSLSCMVFFLIVVI) traverse the membrane as a helical segment. At 238 to 275 (YKKFQIPCIVPELNSTISANSTNADTCTPKYVTFNSKT) the chain is on the extracellular side. C245 and C264 are oxidised to a cystine. N-linked (GlcNAc...) asparagine glycosylation is found at N251 and N257. A helical membrane pass occupies residues 276 to 296 (VYALPTIAFAFVCHPSVLPIY). The Cytoplasmic portion of the chain corresponds to 297-312 (SELKDRSQKKMQMVSN). A helical transmembrane segment spans residues 313–333 (ISFFAMFVMYFLTAIFGYLTF). Residues 334 to 350 (YDNVQSDLLHKYQSKDD) are Extracellular-facing. Residues 351 to 371 (ILILTVRLAVIVAVILTVPVL) form a helical membrane-spanning segment. At 372–393 (FFTVRSSLFELAKKTKFNLCRH) the chain is on the cytoplasmic side. A helical transmembrane segment spans residues 394 to 414 (TVVTCILLVVINLLVIFIPSM). Residues 415–416 (KD) are Extracellular-facing. The chain crosses the membrane as a helical span at residues 417 to 437 (IFGVVGVTSANMLIFILPSSL). The Cytoplasmic segment spans residues 438-452 (YLKITDQDGDKGTQR). Residues 453–473 (IWAALFLGLGVLFSLVSIPLV) traverse the membrane as a helical segment. Over 474 to 487 (IYDWACSSSSDEGH) the chain is Extracellular.

The protein belongs to the amino acid/polyamine transporter 2 family. In terms of processing, N-glycosylation plays an important role in the L-glutamine transport. As to expression, expressed in the cerebral cortex by pyramidal and GABAergic neurons, astrocytes and other non-neuronal cells (at protein level). Expressed in placenta, heart, lung, skeletal muscle, spleen, stomach and testis. Highly expressed in cytotrophoblast cells from term placenta.

It is found in the cell membrane. The catalysed reaction is L-glutamine(in) + Na(+)(in) = L-glutamine(out) + Na(+)(out). It catalyses the reaction L-alanine(in) + Na(+)(in) = L-alanine(out) + Na(+)(out). The enzyme catalyses L-asparagine(in) + Na(+)(in) = L-asparagine(out) + Na(+)(out). It carries out the reaction L-histidine(in) + Na(+)(in) = L-histidine(out) + Na(+)(out). The catalysed reaction is L-serine(in) + Na(+)(in) = L-serine(out) + Na(+)(out). It catalyses the reaction L-cysteine(in) + Na(+)(in) = L-cysteine(out) + Na(+)(out). The enzyme catalyses L-methionine(in) + Na(+)(in) = L-methionine(out) + Na(+)(out). It carries out the reaction glycine(in) + Na(+)(in) = glycine(out) + Na(+)(out). The catalysed reaction is L-threonine(in) + Na(+)(in) = L-threonine(out) + Na(+)(out). It catalyses the reaction L-proline(in) + Na(+)(in) = L-proline(out) + Na(+)(out). With respect to regulation, inhibited by alpha-(methylamino)isobutyric acid (MeAIB). Inhibited by lithium, potassium, choline ions, N-methylglucamine. The pH dependence has an allosteric effect on the transport. Functionally, symporter that cotransports short-chain neutral amino acids and sodium ions from the extraccellular to the intracellular side of the cell membrane. The transport is elctrogenic, pH dependent and driven by the Na(+) electrochemical gradient. Participates in the astroglia-derived glutamine transport into GABAergic interneurons for neurotransmitter GABA de novo synthesis. May also contributes to amino acid transport in placental trophoblasts. Also regulates synaptic plasticity. This is Sodium-coupled neutral amino acid symporter 1 (SLC38A1) from Homo sapiens (Human).